A 420-amino-acid chain; its full sequence is Serine--tRNA ligase (420 aa).

229-231 is an L-serine binding site; sequence TAE. 260–262 serves as a coordination point for ATP; sequence RSE. Position 283 (Glu283) interacts with L-serine. 347 to 350 contacts ATP; sequence EISS. Ser381 is an L-serine binding site.

This sequence belongs to the class-II aminoacyl-tRNA synthetase family. Type-1 seryl-tRNA synthetase subfamily. Homodimer. The tRNA molecule binds across the dimer.

The protein resides in the cytoplasm. The enzyme catalyses tRNA(Ser) + L-serine + ATP = L-seryl-tRNA(Ser) + AMP + diphosphate + H(+). The catalysed reaction is tRNA(Sec) + L-serine + ATP = L-seryl-tRNA(Sec) + AMP + diphosphate + H(+). It functions in the pathway aminoacyl-tRNA biosynthesis; selenocysteinyl-tRNA(Sec) biosynthesis; L-seryl-tRNA(Sec) from L-serine and tRNA(Sec): step 1/1. Functionally, catalyzes the attachment of serine to tRNA(Ser). Is also able to aminoacylate tRNA(Sec) with serine, to form the misacylated tRNA L-seryl-tRNA(Sec), which will be further converted into selenocysteinyl-tRNA(Sec). The chain is Serine--tRNA ligase from Gluconobacter oxydans (strain 621H) (Gluconobacter suboxydans).